A 795-amino-acid polypeptide reads, in one-letter code: Mitochondrial intermediate peptidase (795 aa).

A mitochondrion-targeting transit peptide spans 1–22; that stretch reads MLKTLNRRSWTCRQCIRILRRN. Residue histidine 561 participates in Zn(2+) binding. Residue glutamate 562 is part of the active site. 2 residues coordinate Zn(2+): histidine 565 and histidine 568.

It belongs to the peptidase M3 family. The cofactor is Zn(2+).

The protein resides in the mitochondrion matrix. The catalysed reaction is Release of an N-terminal octapeptide as second stage of processing of some proteins imported into the mitochondrion.. Its function is as follows. Cleaves proteins, imported into the mitochondrion, to their mature size. While most mitochondrial precursor proteins are processed to the mature form in one step by mitochondrial processing peptidase (MPP), the sequential cleavage by MIP of an octapeptide after initial processing by MPP is a required step for a subgroup of nuclear-encoded precursor proteins destined for the matrix or the inner membrane. The polypeptide is Mitochondrial intermediate peptidase (OCT1) (Coccidioides immitis (strain RS) (Valley fever fungus)).